Reading from the N-terminus, the 341-residue chain is Elongation factor Ts (341 aa).

The interval Thr80–Val83 is involved in Mg(2+) ion dislocation from EF-Tu.

This sequence belongs to the EF-Ts family.

It is found in the cytoplasm. Functionally, associates with the EF-Tu.GDP complex and induces the exchange of GDP to GTP. It remains bound to the aminoacyl-tRNA.EF-Tu.GTP complex up to the GTP hydrolysis stage on the ribosome. This Lactobacillus gasseri (strain ATCC 33323 / DSM 20243 / BCRC 14619 / CIP 102991 / JCM 1131 / KCTC 3163 / NCIMB 11718 / NCTC 13722 / AM63) protein is Elongation factor Ts.